The chain runs to 195 residues: ATP-dependent Clp protease proteolytic subunit (195 aa).

Residue Ser97 is the Nucleophile of the active site. His122 is a catalytic residue.

This sequence belongs to the peptidase S14 family. In terms of assembly, fourteen ClpP subunits assemble into 2 heptameric rings which stack back to back to give a disk-like structure with a central cavity, resembling the structure of eukaryotic proteasomes.

The protein resides in the cytoplasm. It carries out the reaction Hydrolysis of proteins to small peptides in the presence of ATP and magnesium. alpha-casein is the usual test substrate. In the absence of ATP, only oligopeptides shorter than five residues are hydrolyzed (such as succinyl-Leu-Tyr-|-NHMec, and Leu-Tyr-Leu-|-Tyr-Trp, in which cleavage of the -Tyr-|-Leu- and -Tyr-|-Trp bonds also occurs).. Functionally, cleaves peptides in various proteins in a process that requires ATP hydrolysis. Has a chymotrypsin-like activity. Plays a major role in the degradation of misfolded proteins. This Lactobacillus gasseri (strain ATCC 33323 / DSM 20243 / BCRC 14619 / CIP 102991 / JCM 1131 / KCTC 3163 / NCIMB 11718 / NCTC 13722 / AM63) protein is ATP-dependent Clp protease proteolytic subunit.